We begin with the raw amino-acid sequence, 1432 residues long: Probable ATP-dependent RNA helicase spindle-E (1432 aa).

The 168-residue stretch at 125 to 292 (MKAIRENTVV…FATKNGIPPV (168 aa)) folds into the Helicase ATP-binding domain. An ATP-binding site is contributed by 138–145 (GETGCGKT). Positions 238 to 241 (DEVH) match the DEAH box motif. Positions 342-525 (VIDNMERRTE…SSVLKAKELN (184 aa)) constitute a Helicase C-terminal domain. A Tudor domain is found at 936-999 (AGSITKNLKL…RFMSNQLKRE (64 aa)).

This sequence belongs to the DEAD box helicase family. DEAH subfamily.

It is found in the cytoplasm. It catalyses the reaction ATP + H2O = ADP + phosphate + H(+). In terms of biological role, probable ATP-binding RNA helicase which plays a central role during spermatogenesis and oogenesis by repressing transposable elements and preventing their mobilization, which is essential for the germline integrity. Acts via the piRNA metabolic process, which mediates the repression of transposable elements during meiosis by forming complexes composed of piRNAs and Piwi and govern the methylation and subsequent repression of transposons. Involved in the repression of LTR retrotransposon copia. Also involved in telomere regulation by repressing specialized telomeric retroelements HeT-A, TAHRE, and TART; Drosophila telomeres being maintained by transposition of specialized telomeric retroelements. Involved in telomeric trans-silencing, a repression mechanism by which a transposon or a transgene inserted in subtelomeric heterochromatin has the capacity to repress in trans in the female germline, a homologous transposon, or transgene located in euchromatin. Involved in the repression of testis-expressed Stellate genes by the homologous Su(Ste) repeats. Required for anteroposterior and dorsoventral axis formation during oogenesis. In Drosophila willistoni (Fruit fly), this protein is Probable ATP-dependent RNA helicase spindle-E (spn-E).